The following is a 313-amino-acid chain: Pyrimidine-specific ribonucleoside hydrolase RihB (313 aa).

Catalysis depends on Asp11, which acts as the Proton acceptor. The Ca(2+) site is built by Asp11, Asp16, and Val124. The substrate site is built by Gln227 and His239. Asp240 is a binding site for Ca(2+).

It belongs to the IUNH family. RihB subfamily. In terms of assembly, homotetramer. Ca(2+) serves as cofactor.

It catalyses the reaction a pyrimidine ribonucleoside + H2O = a pyrimidine nucleobase + D-ribose. Hydrolyzes cytidine or uridine to ribose and cytosine or uracil, respectively. Has a clear preference for cytidine over uridine. Strictly specific for ribonucleosides. This is Pyrimidine-specific ribonucleoside hydrolase RihB from Escherichia coli (strain SMS-3-5 / SECEC).